Consider the following 245-residue polypeptide: Adenosylcobinamide-GDP ribazoletransferase (245 aa).

Helical transmembrane passes span 31-51 (LLHY…AALL), 57-77 (PLLQ…ALHL), 109-129 (VAVV…LVVL), 134-154 (PAAL…LFLC), and 176-196 (ALMV…TGLL).

Belongs to the CobS family. The cofactor is Mg(2+).

The protein resides in the cell inner membrane. It catalyses the reaction alpha-ribazole + adenosylcob(III)inamide-GDP = adenosylcob(III)alamin + GMP + H(+). The catalysed reaction is alpha-ribazole 5'-phosphate + adenosylcob(III)inamide-GDP = adenosylcob(III)alamin 5'-phosphate + GMP + H(+). It functions in the pathway cofactor biosynthesis; adenosylcobalamin biosynthesis; adenosylcobalamin from cob(II)yrinate a,c-diamide: step 7/7. In terms of biological role, joins adenosylcobinamide-GDP and alpha-ribazole to generate adenosylcobalamin (Ado-cobalamin). Also synthesizes adenosylcobalamin 5'-phosphate from adenosylcobinamide-GDP and alpha-ribazole 5'-phosphate. The polypeptide is Adenosylcobinamide-GDP ribazoletransferase (Stutzerimonas stutzeri (strain A1501) (Pseudomonas stutzeri)).